A 287-amino-acid polypeptide reads, in one-letter code: tRNA pseudouridine synthase B (287 aa).

Aspartate 38 serves as the catalytic Nucleophile.

Belongs to the pseudouridine synthase TruB family. Type 1 subfamily.

The enzyme catalyses uridine(55) in tRNA = pseudouridine(55) in tRNA. Responsible for synthesis of pseudouridine from uracil-55 in the psi GC loop of transfer RNAs. The sequence is that of tRNA pseudouridine synthase B from Mycoplasma mobile (strain ATCC 43663 / 163K / NCTC 11711) (Mesomycoplasma mobile).